The primary structure comprises 964 residues: Adhesion defective protein 3 (964 aa).

Residues 1-32 (MADFMDIEPSSHSAKASQYESSAPASSSLGNS) are disordered. Over residues 16 to 32 (ASQYESSAPASSSLGNS) the composition is skewed to low complexity. In terms of domain architecture, LisH spans 34–66 (PNESLDYYIYDYFVKHNFEEAAQAFLRESKIQI). Residues 69–83 (SSSSTAFSPSNNNAP) show a composition bias toward low complexity. 5 disordered regions span residues 69–125 (SSSS…EETN), 241–273 (PKGT…PASA), 476–523 (VSMK…TSRM), 572–596 (QTLS…MSMD), and 664–914 (APMI…KPIS). Polar residues-rich tracts occupy residues 93-103 (LASPSKISESI), 261-270 (AMQNPHNSFP), and 508-523 (TQAN…TSRM). Residues 575–589 (SSGNQPPQQSGPNPN) show a composition bias toward low complexity. Polar residues-rich tracts occupy residues 664-700 (APMI…TNRN), 707-716 (SPHQQFSPSA), 724-752 (RSMS…QNKE), 767-801 (AFPQ…SSLH), 818-828 (TIRTTERSTFS), and 857-868 (GGTNSISQDTTQ). Residues 869 to 885 (SLQMQSNSVNSSSMVDA) are compositionally biased toward low complexity. Over residues 894–905 (GDTSALDSNAKN) the composition is skewed to polar residues.

This sequence belongs to the FLO8 family.

Its subcellular location is the cytoplasm. It localises to the nucleus. Functionally, probable transcriptional regulator involved in cell adhesion. This chain is Adhesion defective protein 3 (adn3), found in Schizosaccharomyces pombe (strain 972 / ATCC 24843) (Fission yeast).